Consider the following 741-residue polypeptide: Catalase-peroxidase (741 aa).

Residues M1–A23 form the signal peptide. The tryptophyl-tyrosyl-methioninium (Trp-Tyr) (with M-249) cross-link spans W102–Y223. H103 acts as the Proton acceptor in catalysis. Positions Y223 to M249 form a cross-link, tryptophyl-tyrosyl-methioninium (Tyr-Met) (with W-102). Residue H264 coordinates heme b.

This sequence belongs to the peroxidase family. Peroxidase/catalase subfamily. In terms of assembly, homodimer or homotetramer. Heme b is required as a cofactor. Formation of the three residue Trp-Tyr-Met cross-link is important for the catalase, but not the peroxidase activity of the enzyme.

The catalysed reaction is H2O2 + AH2 = A + 2 H2O. It carries out the reaction 2 H2O2 = O2 + 2 H2O. In terms of biological role, bifunctional enzyme with both catalase and broad-spectrum peroxidase activity. This Francisella tularensis subsp. tularensis (strain WY96-3418) protein is Catalase-peroxidase.